Reading from the N-terminus, the 294-residue chain is MASFAQWISGARPRTLPNAVAPVVAGTGTAAWLHSAVWWKALLALVVAVALVIGVNYANDYSDGIRGTDDHRAGPMRLVGSRLAFPRSVLTAAVVGLTVSTVAGLALALLSAPWLIMVGATCIAGAWLYTGSSKPYGYKGFGEVAVFVFFGLVAVLGTEYTQALRVDWVGLVLAVSTGALSSSVLVANNLRDIHTDTQSHKFTLAVRLGDAHTRQLYQALLVATGVLTVVLMVATSWCAVGLVATPLALRAMRPVRSGRMGPDLTPVLRDTGLAMVVWAIAVAGALTLAGSVTY.

6 helical membrane passes run 35-55 (SAVW…VIGV), 103-123 (AGLA…ATCI), 140-160 (GFGE…GTEY), 166-186 (VDWV…SVLV), 220-240 (LLVA…WCAV), and 272-292 (GLAM…AGSV).

This sequence belongs to the MenA family. Type 1 subfamily.

The protein localises to the cell membrane. The catalysed reaction is an all-trans-polyprenyl diphosphate + 1,4-dihydroxy-2-naphthoate + H(+) = a 2-demethylmenaquinol + CO2 + diphosphate. The protein operates within quinol/quinone metabolism; menaquinone biosynthesis; menaquinol from 1,4-dihydroxy-2-naphthoate: step 1/2. Its function is as follows. Conversion of 1,4-dihydroxy-2-naphthoate (DHNA) to demethylmenaquinone (DMK). This chain is 1,4-dihydroxy-2-naphthoate octaprenyltransferase, found in Mycobacterium leprae (strain TN).